We begin with the raw amino-acid sequence, 173 residues long: Nanos homolog 3 (173 aa).

Residues Lys-23–Ser-51 are disordered. Residues Leu-57–Leu-111 form a Nanos-type zinc finger. The Zn(2+) site is built by Cys-58, Cys-61, His-74, Cys-85, Cys-93, Cys-96, His-104, and Cys-109. 2 consecutive short sequence motifs (C2HC) follow at residues Cys-58–Cys-85 and Cys-93–Cys-109. Positions Thr-123 to Thr-173 are disordered. Residues Val-133–His-145 are compositionally biased toward basic and acidic residues. The span at Ser-161–Thr-173 shows a compositional bias: low complexity.

This sequence belongs to the nanos family. As to quaternary structure, binds mRNA from germ cells. Interacts with PUM2. In terms of tissue distribution, ovary, testis and brain (at protein level). In the ovaries, expressed during multiple stages of oogenesis, including primordial, primary, secondary and antral follicles with the highest expression in the oocytes. In the testis, expressed in germ cells, type A spermatogonia (SA), primary spermatocytes (S1), round spermatids (S3) and elongated spermatids.

It is found in the nucleus. The protein resides in the cytoplasm. It localises to the stress granule. Its subcellular location is the P-body. Functionally, plays a role in the maintenance of the undifferentiated state of germ cells regulating the spermatogonia cell cycle and inducing a prolonged transit in G1 phase. Affects cell proliferation probably by repressing translation of specific mRNAs. Maintains the germ cell lineage by suppressing both Bax-dependent and -independent apoptotic pathways. Essential in the early stage embryo to protect the migrating primordial germ cells (PGCs) from apoptosis. This chain is Nanos homolog 3 (NANOS3), found in Homo sapiens (Human).